We begin with the raw amino-acid sequence, 270 residues long: Urease accessory protein UreD (270 aa).

This sequence belongs to the UreD family. As to quaternary structure, ureD, UreF and UreG form a complex that acts as a GTP-hydrolysis-dependent molecular chaperone, activating the urease apoprotein by helping to assemble the nickel containing metallocenter of UreC. The UreE protein probably delivers the nickel.

The protein localises to the cytoplasm. In terms of biological role, required for maturation of urease via the functional incorporation of the urease nickel metallocenter. The sequence is that of Urease accessory protein UreD from Actinobacillus pleuropneumoniae serotype 3 (strain JL03).